A 185-amino-acid chain; its full sequence is HTH-type transcriptional regulator Hpr (185 aa).

Residues 13 to 157 form the HTH marR-type domain; it reads AMIFSQRIAQ…LIAILRNIYG (145 aa). Positions 63–86 form a DNA-binding region, H-T-H motif; it reads ISEIAKFGVMHVSTAFNFSKKLEE.

In terms of assembly, homodimer.

In terms of biological role, negative regulator of protease production and sporulation. The chain is HTH-type transcriptional regulator Hpr from Bacillus cytotoxicus (strain DSM 22905 / CIP 110041 / 391-98 / NVH 391-98).